We begin with the raw amino-acid sequence, 455 residues long: UDP-N-acetylmuramoylalanine--D-glutamate ligase (455 aa).

119-125 (GTNGKTT) contacts ATP.

Belongs to the MurCDEF family.

It is found in the cytoplasm. The enzyme catalyses UDP-N-acetyl-alpha-D-muramoyl-L-alanine + D-glutamate + ATP = UDP-N-acetyl-alpha-D-muramoyl-L-alanyl-D-glutamate + ADP + phosphate + H(+). It participates in cell wall biogenesis; peptidoglycan biosynthesis. Its function is as follows. Cell wall formation. Catalyzes the addition of glutamate to the nucleotide precursor UDP-N-acetylmuramoyl-L-alanine (UMA). This is UDP-N-acetylmuramoylalanine--D-glutamate ligase from Listeria monocytogenes serovar 1/2a (strain ATCC BAA-679 / EGD-e).